The following is a 613-amino-acid chain: UvrABC system protein C (613 aa).

The GIY-YIG domain occupies 20–98 (ERPGVYLMYD…IKRHKPRYNI (79 aa)). The region spanning 209-244 (FDVIESLGHKMQQASDEFEFEKAALYRDKISALRAI) is the UVR domain.

This sequence belongs to the UvrC family. In terms of assembly, interacts with UvrB in an incision complex.

The protein localises to the cytoplasm. The UvrABC repair system catalyzes the recognition and processing of DNA lesions. UvrC both incises the 5' and 3' sides of the lesion. The N-terminal half is responsible for the 3' incision and the C-terminal half is responsible for the 5' incision. In Hydrogenovibrio crunogenus (strain DSM 25203 / XCL-2) (Thiomicrospira crunogena), this protein is UvrABC system protein C.